The primary structure comprises 852 residues: Thrombospondin type-1 domain-containing protein 1 (852 aa).

The N-terminal stretch at 1–24 is a signal peptide; that stretch reads MKPMLKDFSNLLLVVLCDYVLGEA. Over 25-413 the chain is Extracellular; sequence EYLLLREPGH…QPQGPVKSNN (389 aa). Asn39, Asn53, Asn58, Asn69, Asn80, Asn135, and Asn304 each carry an N-linked (GlcNAc...) asparagine glycan. In terms of domain architecture, TSP type-1 spans 340 to 393; that stretch reads TETWGLWQPWSQCSATCGDGVRERRRVCLTSFPSSPVCPGMSLEASLCSLEECA. 3 disulfides stabilise this stretch: Cys352/Cys387, Cys356/Cys392, and Cys367/Cys377. The chain crosses the membrane as a helical span at residues 414–434; sequence IVTVTGISLCLFIIIATVLIT. Residues 435–852 lie on the Cytoplasmic side of the membrane; that stretch reads LWRRFGRPAK…STLSVEKLVI (418 aa). 2 disordered regions span residues 444 to 517 and 624 to 799; these read KCST…ESFQ and LIRK…RKDK. At Ser463 the chain carries Phosphoserine. Positions 645–654 are enriched in basic residues; it reads ARNAHFRRTA. Residues 655–669 are compositionally biased toward basic and acidic residues; it reads SFHEARQARPFRERS. The span at 670–685 shows a compositional bias: polar residues; it reads MSTLTPRQAPAYSSRT. The segment covering 686 to 696 has biased composition (basic and acidic residues); sequence RTCEQAEDRFR. Composition is skewed to polar residues over residues 766 to 778 and 785 to 794; these read SHKS…SSPI and QRVSSLSPSQ.

In terms of assembly, part of a complex composed of THSD1, PTK2/FAK1, TLN1 and VCL. Interacts with TLN1.

Its subcellular location is the endosome membrane. The protein localises to the cell junction. The protein resides in the focal adhesion. It localises to the membrane. It is found in the secreted. Functionally, is a positive regulator of nascent focal adhesion assembly, involved in the modulation of endothelial cell attachment to the extracellular matrix. In Homo sapiens (Human), this protein is Thrombospondin type-1 domain-containing protein 1 (THSD1).